A 396-amino-acid chain; its full sequence is Tryptophan synthase beta chain (396 aa).

Position 86 is an N6-(pyridoxal phosphate)lysine (lysine 86).

Belongs to the TrpB family. Tetramer of two alpha and two beta chains. Requires pyridoxal 5'-phosphate as cofactor.

It catalyses the reaction (1S,2R)-1-C-(indol-3-yl)glycerol 3-phosphate + L-serine = D-glyceraldehyde 3-phosphate + L-tryptophan + H2O. The protein operates within amino-acid biosynthesis; L-tryptophan biosynthesis; L-tryptophan from chorismate: step 5/5. The beta subunit is responsible for the synthesis of L-tryptophan from indole and L-serine. In Pectobacterium atrosepticum (strain SCRI 1043 / ATCC BAA-672) (Erwinia carotovora subsp. atroseptica), this protein is Tryptophan synthase beta chain.